Reading from the N-terminus, the 203-residue chain is dITP/XTP pyrophosphatase (203 aa).

16–21 (SHNRGK) serves as a coordination point for substrate. Residues Glu-48 and Asp-77 each contribute to the Mg(2+) site. Residue Asp-77 is the Proton acceptor of the active site. Substrate is bound by residues Ser-78, 161–164 (FGYD), Lys-184, and 189–190 (HR).

Belongs to the HAM1 NTPase family. Homodimer. Requires Mg(2+) as cofactor.

The catalysed reaction is XTP + H2O = XMP + diphosphate + H(+). The enzyme catalyses dITP + H2O = dIMP + diphosphate + H(+). It catalyses the reaction ITP + H2O = IMP + diphosphate + H(+). Pyrophosphatase that catalyzes the hydrolysis of nucleoside triphosphates to their monophosphate derivatives, with a high preference for the non-canonical purine nucleotides XTP (xanthosine triphosphate), dITP (deoxyinosine triphosphate) and ITP. Seems to function as a house-cleaning enzyme that removes non-canonical purine nucleotides from the nucleotide pool, thus preventing their incorporation into DNA/RNA and avoiding chromosomal lesions. This is dITP/XTP pyrophosphatase from Rhodospirillum centenum (strain ATCC 51521 / SW).